The sequence spans 489 residues: Coiled-coil domain-containing protein 77 (489 aa).

Ser38 bears the Phosphoserine mark. Coiled coils occupy residues 57 to 120 (SQEL…QVCL) and 212 to 487 (ERHQ…NALR).

This is Coiled-coil domain-containing protein 77 (Ccdc77) from Mus musculus (Mouse).